Reading from the N-terminus, the 274-residue chain is 3-methyl-2-oxobutanoate hydroxymethyltransferase (274 aa).

Mg(2+)-binding residues include D46 and D85. Residues 46 to 47 (DS), D85, and K115 contribute to the 3-methyl-2-oxobutanoate site. E117 serves as a coordination point for Mg(2+). The active-site Proton acceptor is the E184.

This sequence belongs to the PanB family. In terms of assembly, homodecamer; pentamer of dimers. It depends on Mg(2+) as a cofactor.

It localises to the cytoplasm. It carries out the reaction 3-methyl-2-oxobutanoate + (6R)-5,10-methylene-5,6,7,8-tetrahydrofolate + H2O = 2-dehydropantoate + (6S)-5,6,7,8-tetrahydrofolate. It functions in the pathway cofactor biosynthesis; coenzyme A biosynthesis. In terms of biological role, catalyzes the reversible reaction in which hydroxymethyl group from 5,10-methylenetetrahydrofolate is transferred onto alpha-ketoisovalerate to form ketopantoate. This chain is 3-methyl-2-oxobutanoate hydroxymethyltransferase, found in Halobacterium salinarum (strain ATCC 29341 / DSM 671 / R1).